The following is a 638-amino-acid chain: Chaperone protein DnaK (638 aa).

A Phosphothreonine; by autocatalysis modification is found at threonine 197. Residues 600–638 (SGAQGGAQAGPGAGAGQQANQGSSNNKEDIQDADFEEVK) form a disordered region. Gly residues predominate over residues 602–614 (AQGGAQAGPGAGA). Residues 615-624 (GQQANQGSSN) show a composition bias toward low complexity. Residues 625–638 (NKEDIQDADFEEVK) show a composition bias toward basic and acidic residues.

This sequence belongs to the heat shock protein 70 family.

In terms of biological role, acts as a chaperone. The chain is Chaperone protein DnaK from Phocaeicola vulgatus (strain ATCC 8482 / DSM 1447 / JCM 5826 / CCUG 4940 / NBRC 14291 / NCTC 11154) (Bacteroides vulgatus).